Consider the following 61-residue polypeptide: MITALTALLVLISLGLIVTVPVALATPGEWENSKSDFTKGFQAWVALVLVIAAADGVASSL.

2 helical membrane passes run 5–25 (LTAL…VALA) and 38–58 (TKGF…DGVA).

This sequence belongs to the PsbZ family. As to quaternary structure, PSII is composed of 1 copy each of membrane proteins PsbA, PsbB, PsbC, PsbD, PsbE, PsbF, PsbH, PsbI, PsbJ, PsbK, PsbL, PsbM, PsbT, PsbX, PsbY, PsbZ, Psb30/Ycf12, at least 3 peripheral proteins of the oxygen-evolving complex and a large number of cofactors. It forms dimeric complexes.

Its subcellular location is the plastid. It is found in the chloroplast thylakoid membrane. Functionally, may control the interaction of photosystem II (PSII) cores with the light-harvesting antenna, regulates electron flow through the 2 photosystem reaction centers. PSII is a light-driven water plastoquinone oxidoreductase, using light energy to abstract electrons from H(2)O, generating a proton gradient subsequently used for ATP formation. This Phaeodactylum tricornutum (strain CCAP 1055/1) protein is Photosystem II reaction center protein Z.